A 206-amino-acid chain; its full sequence is MTFNICVLISGNGTNLQAIIDAIESKYLNVCIKVVISNKETAYGLERAKKASIETRVFSLQKYLKQDPINNTRSTYGLELAKIIREYSSIDLIVLAGWMIILPATFLKEFTDNKPTIDIINLHPALPGQYPGAHAIERAFNDFKENKIKHSGIMIHKVIEEVDAGEVILTKEIPILPTDTLESLEERFHQQEHKSLVESIKLLSTK.

13 to 15 contributes to the N(1)-(5-phospho-beta-D-ribosyl)glycinamide binding site; sequence GTN. (6R)-10-formyltetrahydrofolate contacts are provided by residues 99–102 and Asn-121; that span reads MIIL. The Proton donor role is filled by His-123. Asp-163 serves as a coordination point for (6R)-10-formyltetrahydrofolate. Glu-192 provides a ligand contact to N(1)-(5-phospho-beta-D-ribosyl)glycinamide.

It belongs to the GART family.

The enzyme catalyses N(1)-(5-phospho-beta-D-ribosyl)glycinamide + (6R)-10-formyltetrahydrofolate = N(2)-formyl-N(1)-(5-phospho-beta-D-ribosyl)glycinamide + (6S)-5,6,7,8-tetrahydrofolate + H(+). It participates in purine metabolism; IMP biosynthesis via de novo pathway; N(2)-formyl-N(1)-(5-phospho-D-ribosyl)glycinamide from N(1)-(5-phospho-D-ribosyl)glycinamide (10-formyl THF route): step 1/1. This is Phosphoribosylglycinamide formyltransferase (purN) from Dictyostelium discoideum (Social amoeba).